Consider the following 564-residue polypeptide: Beta-hexosaminidase subunit B2 (564 aa).

An N-terminal signal peptide occupies residues 1-19 (MKLKFIFLILFFIIGNSIG). N-linked (GlcNAc...) asparagine glycans are attached at residues Asn-43, Asn-84, Asn-303, and Asn-347. Glu-357 acts as the Proton donor in catalysis. Asn-364, Asn-377, Asn-439, Asn-524, and Asn-551 each carry an N-linked (GlcNAc...) asparagine glycan.

Belongs to the glycosyl hydrolase 20 family.

Its subcellular location is the lysosome. The enzyme catalyses Hydrolysis of terminal non-reducing N-acetyl-D-hexosamine residues in N-acetyl-beta-D-hexosaminides.. Functionally, responsible for the degradation of GM2 gangliosides, and a variety of other molecules containing terminal N-acetyl hexosamines. This chain is Beta-hexosaminidase subunit B2 (hexb2), found in Dictyostelium discoideum (Social amoeba).